The chain runs to 263 residues: H-2 class II histocompatibility antigen, A-K beta chain (263 aa).

The signal sequence occupies residues 1–27 (MALQIPSLLLLAAVVVLTVLSSPGTEG). Positions 28-120 (GNSERHFVHQ…TETPTSLRRL (93 aa)) are beta-1. The Extracellular segment spans residues 28 to 224 (GNSERHFVHQ…RAQSESARSK (197 aa)). 2 disulfide bridges follow: Cys42/Cys104 and Cys143/Cys199. The N-linked (GlcNAc...) asparagine glycan is linked to Asn46. The interval 121–214 (EQPSVVISLS…SLKSPITVEW (94 aa)) is beta-2. The Ig-like C1-type domain occupies 123–211 (PSVVISLSRT…EHPSLKSPIT (89 aa)). The segment at 215 to 224 (RAQSESARSK) is connecting peptide. The chain crosses the membrane as a helical span at residues 225–245 (MLSGIGGCVLGVIFLGLGLFI). Over 246–263 (RHRSQKGPRGPPPAGLLQ) the chain is Cytoplasmic.

Belongs to the MHC class II family. In terms of processing, ubiquitinated in immature dendritic cells leading to down-regulation of MHC class II.

It localises to the membrane. The polypeptide is H-2 class II histocompatibility antigen, A-K beta chain (H2-Ab1) (Mus musculus (Mouse)).